Reading from the N-terminus, the 449-residue chain is Tubulin alpha-1C chain (449 aa).

Positions Met1–Cys4 match the MREC motif motif. Residue Gln11 coordinates GTP. Lys40 is subject to N6-acetyllysine. Positions 71, 140, 144, 145, 179, 206, and 228 each coordinate GTP. Mg(2+) is bound at residue Glu71. Residue Glu254 is part of the active site. 3'-nitrotyrosine is present on Tyr282. Residues Glu429–Tyr449 form a disordered region. Over residues Asp431–Tyr449 the composition is skewed to acidic residues. Tyr432 carries the phosphotyrosine modification. Position 439 is a phosphoserine (Ser439). At Tyr449 the chain carries 3'-nitrotyrosine.

Belongs to the tubulin family. In terms of assembly, dimer of alpha and beta chains. A typical microtubule is a hollow water-filled tube with an outer diameter of 25 nm and an inner diameter of 15 nM. Alpha-beta heterodimers associate head-to-tail to form protofilaments running lengthwise along the microtubule wall with the beta-tubulin subunit facing the microtubule plus end conferring a structural polarity. Microtubules usually have 13 protofilaments but different protofilament numbers can be found in some organisms and specialized cells. Mg(2+) serves as cofactor. In terms of processing, some glutamate residues at the C-terminus are polyglutamylated, resulting in polyglutamate chains on the gamma-carboxyl group. Polyglutamylation plays a key role in microtubule severing by spastin (SPAST). SPAST preferentially recognizes and acts on microtubules decorated with short polyglutamate tails: severing activity by SPAST increases as the number of glutamates per tubulin rises from one to eight, but decreases beyond this glutamylation threshold. Glutamylation is also involved in cilia motility. Post-translationally, some glutamate residues at the C-terminus are monoglycylated but not polyglycylated due to the absence of functional TTLL10 in human. Monoglycylation is mainly limited to tubulin incorporated into cilia and flagella axonemes, which is required for their stability and maintenance. Flagella glycylation controls sperm motility. Both polyglutamylation and monoglycylation can coexist on the same protein on adjacent residues, and lowering glycylation levels increases polyglutamylation, and reciprocally. Acetylation of alpha chains at Lys-40 is located inside the microtubule lumen. This modification has been correlated with increased microtubule stability, intracellular transport and ciliary assembly. In terms of processing, methylation of alpha chains at Lys-40 is found in mitotic microtubules and is required for normal mitosis and cytokinesis contributing to genomic stability. Post-translationally, nitration of Tyr-449 is irreversible and interferes with normal dynein intracellular distribution. Undergoes a tyrosination/detyrosination cycle, the cyclic removal and re-addition of a C-terminal tyrosine residue by the enzymes tubulin tyrosine carboxypeptidase (MATCAP1/KIAA0895L, VASH1 or VASH2) and tubulin tyrosine ligase (TTL), respectively. In terms of processing, tyrosination promotes microtubule interaction with CAP-Gly domain-containing proteins such as CLIP1, CLIP2 and DCTN1. Tyrosination regulates the initiation of dynein-dynactin motility via interaction with DCTN1, which brings the dynein-dynactin complex into contact with microtubules. In neurons, tyrosinated tubulins mediate the initiation of retrograde vesicle transport. Post-translationally, detyrosination is involved in metaphase plate congression by guiding chromosomes during mitosis: detyrosination promotes interaction with CENPE, promoting pole-proximal transport of chromosomes toward the equator. Detyrosination increases microtubules-dependent mechanotransduction in dystrophic cardiac and skeletal muscle. In cardiomyocytes, detyrosinated microtubules are required to resist to contractile compression during contraction: detyrosination promotes association with desmin (DES) at force-generating sarcomeres, leading to buckled microtubules and mechanical resistance to contraction.

The protein localises to the cytoplasm. The protein resides in the cytoskeleton. The catalysed reaction is GTP + H2O = GDP + phosphate + H(+). Tubulin is the major constituent of microtubules, a cylinder consisting of laterally associated linear protofilaments composed of alpha- and beta-tubulin heterodimers. Microtubules grow by the addition of GTP-tubulin dimers to the microtubule end, where a stabilizing cap forms. Below the cap, tubulin dimers are in GDP-bound state, owing to GTPase activity of alpha-tubulin. This chain is Tubulin alpha-1C chain (TUBA1C), found in Homo sapiens (Human).